The chain runs to 915 residues: Rab3 GTPase-activating protein catalytic subunit (915 aa).

Belongs to the Rab3-GAP catalytic subunit family. The Rab3 GTPase-activating complex is a heterodimer composed of rbg-1 and rbg-2.

The protein localises to the cytoplasm. Its function is as follows. Probable catalytic subunit of a GTPase activating protein that has specificity for Rab3 subfamily. Rab3 proteins are involved in regulated exocytosis of neurotransmitters and hormones. Specifically converts active Rab3-GTP to the inactive form Rab3-GDP. This chain is Rab3 GTPase-activating protein catalytic subunit (rbg-1), found in Caenorhabditis elegans.